The primary structure comprises 178 residues: Fatty-acid and retinol-binding protein 1 (178 aa).

A signal peptide spans 1–16 (MYHQLILMALIGVIMA). Residues Asn44 and Asn75 are each glycosylated (N-linked (GlcNAc...) asparagine). Coiled-coil stretches lie at residues 67–89 (DAAL…ELRN) and 122–154 (QKLD…LKAT). Asn157 carries N-linked (GlcNAc...) asparagine glycosylation.

The protein belongs to the fatty-acid and retinol-binding protein (FARBP) family. N-glycosylated.

The protein resides in the secreted. Its function is as follows. Binds retinol and different fatty acids. This is Fatty-acid and retinol-binding protein 1 from Onchocerca dukei (Filarial nematode worm).